The chain runs to 452 residues: Bifunctional protein GlmU (452 aa).

Residues 1–232 are pyrophosphorylase; sequence MTGRSCLTIV…EDEVRGINTK (232 aa). UDP-N-acetyl-alpha-D-glucosamine contacts are provided by residues 11–14, Lys-25, Gln-78, and 83–84; these read LAAG and GT. Position 108 (Asp-108) interacts with Mg(2+). UDP-N-acetyl-alpha-D-glucosamine is bound by residues Gly-144, Glu-158, Asn-173, and Asn-230. A Mg(2+)-binding site is contributed by Asn-230. Positions 233–253 are linker; it reads AQLAEAEQVMQARLRKEALDA. Residues 254–452 are N-acetyltransferase; that stretch reads GVTMVAPDTV…KLLAKKPKTG (199 aa). UDP-N-acetyl-alpha-D-glucosamine is bound by residues Arg-319 and Lys-337. His-349 (proton acceptor) is an active-site residue. UDP-N-acetyl-alpha-D-glucosamine is bound by residues Tyr-352 and Asn-363. Residues Ala-366, 372-373, Ser-391, Ser-409, and Arg-426 contribute to the acetyl-CoA site; that span reads NY.

In the N-terminal section; belongs to the N-acetylglucosamine-1-phosphate uridyltransferase family. The protein in the C-terminal section; belongs to the transferase hexapeptide repeat family. In terms of assembly, homotrimer. Mg(2+) is required as a cofactor.

The protein localises to the cytoplasm. The enzyme catalyses alpha-D-glucosamine 1-phosphate + acetyl-CoA = N-acetyl-alpha-D-glucosamine 1-phosphate + CoA + H(+). It carries out the reaction N-acetyl-alpha-D-glucosamine 1-phosphate + UTP + H(+) = UDP-N-acetyl-alpha-D-glucosamine + diphosphate. It functions in the pathway nucleotide-sugar biosynthesis; UDP-N-acetyl-alpha-D-glucosamine biosynthesis; N-acetyl-alpha-D-glucosamine 1-phosphate from alpha-D-glucosamine 6-phosphate (route II): step 2/2. The protein operates within nucleotide-sugar biosynthesis; UDP-N-acetyl-alpha-D-glucosamine biosynthesis; UDP-N-acetyl-alpha-D-glucosamine from N-acetyl-alpha-D-glucosamine 1-phosphate: step 1/1. Its pathway is bacterial outer membrane biogenesis; LPS lipid A biosynthesis. Its function is as follows. Catalyzes the last two sequential reactions in the de novo biosynthetic pathway for UDP-N-acetylglucosamine (UDP-GlcNAc). The C-terminal domain catalyzes the transfer of acetyl group from acetyl coenzyme A to glucosamine-1-phosphate (GlcN-1-P) to produce N-acetylglucosamine-1-phosphate (GlcNAc-1-P), which is converted into UDP-GlcNAc by the transfer of uridine 5-monophosphate (from uridine 5-triphosphate), a reaction catalyzed by the N-terminal domain. This is Bifunctional protein GlmU from Nitrobacter hamburgensis (strain DSM 10229 / NCIMB 13809 / X14).